Here is a 430-residue protein sequence, read N- to C-terminus: Bifunctional protein GlmU (430 aa).

The pyrophosphorylase stretch occupies residues 1–223 (MSISVVILAA…EEEFKGVNSK (223 aa)). UDP-N-acetyl-alpha-D-glucosamine-binding positions include 8 to 11 (LAAG), K22, and 81 to 82 (GT). Position 102 (D102) interacts with Mg(2+). UDP-N-acetyl-alpha-D-glucosamine-binding residues include G135, E149, N164, and N221. N221 is a binding site for Mg(2+). The tract at residues 224–244 (LDLARAEEIMQRRIKEALMMA) is linker. Residues 245-430 (GVTMCLPETI…NFFYKFFGDK (186 aa)) are N-acetyltransferase. UDP-N-acetyl-alpha-D-glucosamine-binding residues include R308 and K325. H336 serves as the catalytic Proton acceptor. Residues Y339 and N350 each coordinate UDP-N-acetyl-alpha-D-glucosamine. Acetyl-CoA contacts are provided by residues A353, 359 to 360 (NY), S378, A396, and R413.

In the N-terminal section; belongs to the N-acetylglucosamine-1-phosphate uridyltransferase family. It in the C-terminal section; belongs to the transferase hexapeptide repeat family. As to quaternary structure, homotrimer. It depends on Mg(2+) as a cofactor.

It localises to the cytoplasm. The catalysed reaction is alpha-D-glucosamine 1-phosphate + acetyl-CoA = N-acetyl-alpha-D-glucosamine 1-phosphate + CoA + H(+). It catalyses the reaction N-acetyl-alpha-D-glucosamine 1-phosphate + UTP + H(+) = UDP-N-acetyl-alpha-D-glucosamine + diphosphate. Its pathway is nucleotide-sugar biosynthesis; UDP-N-acetyl-alpha-D-glucosamine biosynthesis; N-acetyl-alpha-D-glucosamine 1-phosphate from alpha-D-glucosamine 6-phosphate (route II): step 2/2. It functions in the pathway nucleotide-sugar biosynthesis; UDP-N-acetyl-alpha-D-glucosamine biosynthesis; UDP-N-acetyl-alpha-D-glucosamine from N-acetyl-alpha-D-glucosamine 1-phosphate: step 1/1. The protein operates within bacterial outer membrane biogenesis; LPS lipid A biosynthesis. Its function is as follows. Catalyzes the last two sequential reactions in the de novo biosynthetic pathway for UDP-N-acetylglucosamine (UDP-GlcNAc). The C-terminal domain catalyzes the transfer of acetyl group from acetyl coenzyme A to glucosamine-1-phosphate (GlcN-1-P) to produce N-acetylglucosamine-1-phosphate (GlcNAc-1-P), which is converted into UDP-GlcNAc by the transfer of uridine 5-monophosphate (from uridine 5-triphosphate), a reaction catalyzed by the N-terminal domain. The polypeptide is Bifunctional protein GlmU (Sulfurovum sp. (strain NBC37-1)).